Reading from the N-terminus, the 477-residue chain is Argininosuccinate lyase (477 aa).

Belongs to the lyase 1 family. Argininosuccinate lyase subfamily.

It localises to the cytoplasm. It catalyses the reaction 2-(N(omega)-L-arginino)succinate = fumarate + L-arginine. It functions in the pathway amino-acid biosynthesis; L-arginine biosynthesis; L-arginine from L-ornithine and carbamoyl phosphate: step 3/3. This is Argininosuccinate lyase from Streptomyces avermitilis (strain ATCC 31267 / DSM 46492 / JCM 5070 / NBRC 14893 / NCIMB 12804 / NRRL 8165 / MA-4680).